A 407-amino-acid chain; its full sequence is Succinate--CoA ligase [ADP-forming] subunit beta, hydrogenosomal (407 aa).

The N-terminal 9 residues, 1–9 (MLSSSFARN), are a transit peptide targeting the hydrogenosome. The 244-residue stretch at 18–261 (KEICAKYNVA…LKQVNPFEIR (244 aa)) folds into the ATP-grasp domain. Residues Lys-55, 62 to 64 (GRG), and Glu-124 each bind ATP. Positions 216 and 230 each coordinate Mg(2+). Substrate-binding positions include Asn-281 and 338-340 (GIV).

The protein belongs to the succinate/malate CoA ligase beta subunit family. As to quaternary structure, heterodimer of an alpha and a beta subunit. The cofactor is Mg(2+).

Its subcellular location is the hydrogenosome. It catalyses the reaction succinate + ATP + CoA = succinyl-CoA + ADP + phosphate. It functions in the pathway carbohydrate metabolism; tricarboxylic acid cycle; succinate from succinyl-CoA (ligase route): step 1/1. Functionally, succinyl-CoA synthetase functions in the citric acid cycle (TCA), coupling the hydrolysis of succinyl-CoA to the synthesis of ATP and thus represents the only step of substrate-level phosphorylation in the TCA. The beta subunit provides nucleotide specificity of the enzyme and binds the substrate succinate, while the binding sites for coenzyme A and phosphate are found in the alpha subunit. The protein is Succinate--CoA ligase [ADP-forming] subunit beta, hydrogenosomal of Trichomonas vaginalis.